The following is a 253-amino-acid chain: Electron transfer flavoprotein subunit beta, mitochondrial (253 aa).

This sequence belongs to the ETF beta-subunit/FixA family. As to quaternary structure, heterodimer of an alpha and a beta subunit. Requires FAD as cofactor. It depends on AMP as a cofactor.

Its subcellular location is the mitochondrion matrix. In terms of biological role, the electron transfer flavoprotein serves as a specific electron acceptor for several dehydrogenases, including five acyl-CoA dehydrogenases, glutaryl-CoA and sarcosine dehydrogenase. It transfers the electrons to the main mitochondrial respiratory chain via ETF-ubiquinone oxidoreductase (ETF dehydrogenase). This is Electron transfer flavoprotein subunit beta, mitochondrial (ETFB) from Oryza sativa subsp. japonica (Rice).